A 277-amino-acid polypeptide reads, in one-letter code: Thymidylate synthase (277 aa).

DUMP is bound by residues arginine 27 and arginine 132 to arginine 133. Residue cysteine 152 is the Nucleophile of the active site. Residues arginine 179–aspartate 182, asparagine 190, and histidine 220–tyrosine 222 contribute to the dUMP site. Position 182 (aspartate 182) interacts with (6R)-5,10-methylene-5,6,7,8-tetrahydrofolate. Position 276 (alanine 276) interacts with (6R)-5,10-methylene-5,6,7,8-tetrahydrofolate.

Belongs to the thymidylate synthase family. Bacterial-type ThyA subfamily. As to quaternary structure, homodimer.

It is found in the cytoplasm. The enzyme catalyses dUMP + (6R)-5,10-methylene-5,6,7,8-tetrahydrofolate = 7,8-dihydrofolate + dTMP. The protein operates within pyrimidine metabolism; dTTP biosynthesis. Its function is as follows. Catalyzes the reductive methylation of 2'-deoxyuridine-5'-monophosphate (dUMP) to 2'-deoxythymidine-5'-monophosphate (dTMP) while utilizing 5,10-methylenetetrahydrofolate (mTHF) as the methyl donor and reductant in the reaction, yielding dihydrofolate (DHF) as a by-product. This enzymatic reaction provides an intracellular de novo source of dTMP, an essential precursor for DNA biosynthesis. In Albidiferax ferrireducens (strain ATCC BAA-621 / DSM 15236 / T118) (Rhodoferax ferrireducens), this protein is Thymidylate synthase.